The following is a 104-amino-acid chain: Iron-sulfur cluster assembly protein CyaY (104 aa).

This sequence belongs to the frataxin family.

Its function is as follows. Involved in iron-sulfur (Fe-S) cluster assembly. May act as a regulator of Fe-S biogenesis. This is Iron-sulfur cluster assembly protein CyaY from Vibrio parahaemolyticus serotype O3:K6 (strain RIMD 2210633).